A 225-amino-acid polypeptide reads, in one-letter code: MHLLIAAAGSGSRMGADRNKLLLKVAGKTVLEWTLKAAFEAKTISWIGIIGQPKDKNPICSILDNSVKAVQWINGGSTRQQSVQLGLAALPNDAKSVLIHDGARCLVRSFVFDEISKIVSKGQSVIAASQVTDTIKKVDIDGEIIESPPRSDLWAAQTPQGFPVNKLKHAHSEAISKGWNVTDDASLFERLGLPVKIYDAGPSNIKVTTPFDLVIAESLLSTLKD.

This sequence belongs to the IspD/TarI cytidylyltransferase family. IspD subfamily.

The catalysed reaction is 2-C-methyl-D-erythritol 4-phosphate + CTP + H(+) = 4-CDP-2-C-methyl-D-erythritol + diphosphate. Its pathway is isoprenoid biosynthesis; isopentenyl diphosphate biosynthesis via DXP pathway; isopentenyl diphosphate from 1-deoxy-D-xylulose 5-phosphate: step 2/6. Functionally, catalyzes the formation of 4-diphosphocytidyl-2-C-methyl-D-erythritol from CTP and 2-C-methyl-D-erythritol 4-phosphate (MEP). This chain is 2-C-methyl-D-erythritol 4-phosphate cytidylyltransferase, found in Prochlorococcus marinus (strain NATL2A).